The primary structure comprises 521 residues: Cytochrome P450 1A1 (521 aa).

Phe229 is a binding site for substrate. Cys463 is a binding site for heme.

Belongs to the cytochrome P450 family. Heme serves as cofactor.

The protein localises to the endoplasmic reticulum membrane. It is found in the microsome membrane. The catalysed reaction is an organic molecule + reduced [NADPH--hemoprotein reductase] + O2 = an alcohol + oxidized [NADPH--hemoprotein reductase] + H2O + H(+). In terms of biological role, cytochromes P450 are a group of heme-thiolate monooxygenases. They oxidize a variety of structurally unrelated compounds, including steroids, fatty acids, and xenobiotics. The chain is Cytochrome P450 1A1 (cyp1a1) from Pleuronectes platessa (European plaice).